The following is a 147-amino-acid chain: Transcriptional regulator MraZ (147 aa).

SpoVT-AbrB domains follow at residues 5-50 (AIAL…PLSA) and 79-122 (AQEE…SDAG).

This sequence belongs to the MraZ family. As to quaternary structure, forms oligomers.

The protein resides in the cytoplasm. Its subcellular location is the nucleoid. The polypeptide is Transcriptional regulator MraZ (Aromatoleum aromaticum (strain DSM 19018 / LMG 30748 / EbN1) (Azoarcus sp. (strain EbN1))).